Here is a 225-residue protein sequence, read N- to C-terminus: Thymidylate kinase (225 aa).

10-17 serves as a coordination point for ATP; sequence GPEGAGKT.

The protein belongs to the thymidylate kinase family.

It catalyses the reaction dTMP + ATP = dTDP + ADP. Phosphorylation of dTMP to form dTDP in both de novo and salvage pathways of dTTP synthesis. This Geobacillus thermodenitrificans (strain NG80-2) protein is Thymidylate kinase.